We begin with the raw amino-acid sequence, 185 residues long: Protein GrpE (185 aa).

Residues 1-37 are disordered; sequence MEEQEEKQYNQNIQDNEEGTQMREELQESTSAQQTLQ. Positions 28–37 are enriched in polar residues; it reads ESTSAQQTLQ.

Belongs to the GrpE family. As to quaternary structure, homodimer.

It localises to the cytoplasm. Functionally, participates actively in the response to hyperosmotic and heat shock by preventing the aggregation of stress-denatured proteins, in association with DnaK and GrpE. It is the nucleotide exchange factor for DnaK and may function as a thermosensor. Unfolded proteins bind initially to DnaJ; upon interaction with the DnaJ-bound protein, DnaK hydrolyzes its bound ATP, resulting in the formation of a stable complex. GrpE releases ADP from DnaK; ATP binding to DnaK triggers the release of the substrate protein, thus completing the reaction cycle. Several rounds of ATP-dependent interactions between DnaJ, DnaK and GrpE are required for fully efficient folding. The protein is Protein GrpE of Helicobacter hepaticus (strain ATCC 51449 / 3B1).